The chain runs to 800 residues: DNA mismatch repair protein MutS (800 aa).

ATP is bound at residue 616–623; it reads GPNMGGKS.

It belongs to the DNA mismatch repair MutS family.

Functionally, this protein is involved in the repair of mismatches in DNA. It is possible that it carries out the mismatch recognition step. This protein has a weak ATPase activity. The chain is DNA mismatch repair protein MutS from Buchnera aphidicola subsp. Baizongia pistaciae (strain Bp).